A 364-amino-acid chain; its full sequence is Chorismate synthase (364 aa).

NADP(+)-binding residues include Arg48 and Arg54. FMN-binding positions include Arg125–Ser127, Asn238–Ala239, Gly278, Lys293–Ser297, and Arg319.

Belongs to the chorismate synthase family. As to quaternary structure, homotetramer. FMNH2 serves as cofactor.

The enzyme catalyses 5-O-(1-carboxyvinyl)-3-phosphoshikimate = chorismate + phosphate. It functions in the pathway metabolic intermediate biosynthesis; chorismate biosynthesis; chorismate from D-erythrose 4-phosphate and phosphoenolpyruvate: step 7/7. Catalyzes the anti-1,4-elimination of the C-3 phosphate and the C-6 proR hydrogen from 5-enolpyruvylshikimate-3-phosphate (EPSP) to yield chorismate, which is the branch point compound that serves as the starting substrate for the three terminal pathways of aromatic amino acid biosynthesis. This reaction introduces a second double bond into the aromatic ring system. In Shewanella loihica (strain ATCC BAA-1088 / PV-4), this protein is Chorismate synthase.